A 115-amino-acid polypeptide reads, in one-letter code: Large ribosomal subunit protein bL19 (115 aa).

Belongs to the bacterial ribosomal protein bL19 family.

In terms of biological role, this protein is located at the 30S-50S ribosomal subunit interface and may play a role in the structure and function of the aminoacyl-tRNA binding site. This chain is Large ribosomal subunit protein bL19, found in Baumannia cicadellinicola subsp. Homalodisca coagulata.